We begin with the raw amino-acid sequence, 766 residues long: LPS-assembly protein LptD (766 aa).

An N-terminal signal peptide occupies residues 1-18 (MNIRYLLLLSLMPHLVWA).

This sequence belongs to the LptD family. Component of the lipopolysaccharide transport and assembly complex. Interacts with LptE and LptA.

It localises to the cell outer membrane. In terms of biological role, together with LptE, is involved in the assembly of lipopolysaccharide (LPS) at the surface of the outer membrane. This chain is LPS-assembly protein LptD, found in Shewanella denitrificans (strain OS217 / ATCC BAA-1090 / DSM 15013).